A 183-amino-acid polypeptide reads, in one-letter code: Peptide deformylase-like (183 aa).

The active site involves E140.

The protein belongs to the polypeptide deformylase family.

The sequence is that of Peptide deformylase-like from Rickettsia conorii (strain ATCC VR-613 / Malish 7).